A 131-amino-acid chain; its full sequence is Conotoxin Cal8.2 (131 aa).

The first 19 residues, M1–A19, serve as a signal peptide directing secretion. A propeptide spanning residues D20–R38 is cleaved from the precursor.

Contains 4 disulfide bonds. Expressed by the venom duct.

It localises to the secreted. In terms of biological role, probable neurotoxin with unknown target. Possibly targets ion channels. This chain is Conotoxin Cal8.2, found in Californiconus californicus (California cone).